Reading from the N-terminus, the 224-residue chain is Claudin-19 (224 aa).

The Cytoplasmic portion of the chain corresponds to 1-7; it reads MANSGLQ. The chain crosses the membrane as a helical span at residues 8-28; sequence LLGYFLALGGWVGIIASTALP. Over 29-81 the chain is Extracellular; it reads QWKQSSYAGDAIITAVGLYEGLWMSCASQSTGQVQCKLYDSLLALDGHIQSAR. A disulfide bond links C54 and C64. A helical membrane pass occupies residues 82-102; it reads ALMVVAVLLGFVAMVLSVVGM. Residues 103–117 are Cytoplasmic-facing; the sequence is KCTRVGDSNPTAKSR. A helical transmembrane segment spans residues 118 to 138; that stretch reads VAISGGALFLLAGLCTLTAVS. Residues 139–160 are Extracellular-facing; it reads WYATLVTQEFFNPSTPVNARYE. Residues 161 to 181 traverse the membrane as a helical segment; it reads FGPALFVGWASAGLAMLGGSF. Residues 182–224 lie on the Cytoplasmic side of the membrane; that stretch reads LCCTCPEPERANSIPQPYRSGPSTAAREPVVKLPASVKGPLGV.

The protein belongs to the claudin family. Can form homo- and heteropolymeric tight junction strands. Interacts with other claudins including CLDN3, CLDN10, CLDN16 and CLDN18 with highest affinity for CLDN16. Interacts (via PDZ-binding motif TRV) with TJP1 (via PDZ domain). As to quaternary structure, (Microbial infection) Interacts (via both extracellular domains) with Clostridium perfringens enterotoxin CPE; the interaction disrupts claudin assembly in tight junctions. Expressed in the corticomedullary axis of the TAL, specifically in the cortex and the outer stripe of outer medulla (OSOM) zone (at protein level). Expressed in peripheral nervous system, in Schwan cells (at protein level).

It is found in the cell junction. The protein resides in the tight junction. It localises to the cell membrane. It catalyses the reaction Mg(2+)(in) = Mg(2+)(out). The catalysed reaction is Ca(2+)(in) = Ca(2+)(out). The enzyme catalyses Na(+)(in) = Na(+)(out). It carries out the reaction K(+)(in) = K(+)(out). It catalyses the reaction Rb(+)(in) = Rb(+)(out). The catalysed reaction is Cs(+)(in) = Cs(+)(out). The enzyme catalyses Li(+)(in) = Li(+)(out). In terms of biological role, forms paracellular channels: coassembles with CLDN16 into tight junction strands with cation-selective channels through the strands, conveying epithelial permeability in a process known as paracellular tight junction permeability. Involved in the maintenance of ion gradients along the nephron. In the thick ascending limb (TAL) of Henle's loop, facilitates sodium paracellular permeability from the interstitial compartment to the lumen, contributing to the lumen-positive transepithelial potential that drives paracellular magnesium and calcium reabsorption. Forms paracellular barriers on its own. In the peripheral nervous system, represents a major constituent of the tight junctions in Schwann cells and contributes to electrical sealing. During retinal neurogenesis, may regulate the barrier properties of tight junctions in retinal pigment epithelium, required for proper retinal tissue differentiation and vision. This chain is Claudin-19, found in Mus musculus (Mouse).